A 138-amino-acid polypeptide reads, in one-letter code: ATP synthase epsilon chain, chloroplastic (138 aa).

The protein belongs to the ATPase epsilon chain family. In terms of assembly, F-type ATPases have 2 components, CF(1) - the catalytic core - and CF(0) - the membrane proton channel. CF(1) has five subunits: alpha(3), beta(3), gamma(1), delta(1), epsilon(1). CF(0) has three main subunits: a, b and c.

It localises to the plastid. Its subcellular location is the chloroplast thylakoid membrane. Produces ATP from ADP in the presence of a proton gradient across the membrane. The sequence is that of ATP synthase epsilon chain, chloroplastic from Anthoceros angustus (Hornwort).